Here is a 492-residue protein sequence, read N- to C-terminus: N-succinylglutamate 5-semialdehyde dehydrogenase (492 aa).

220–225 (GSASTG) lines the NAD(+) pocket. Catalysis depends on residues glutamate 243 and cysteine 277.

Belongs to the aldehyde dehydrogenase family. AstD subfamily.

It carries out the reaction N-succinyl-L-glutamate 5-semialdehyde + NAD(+) + H2O = N-succinyl-L-glutamate + NADH + 2 H(+). It participates in amino-acid degradation; L-arginine degradation via AST pathway; L-glutamate and succinate from L-arginine: step 4/5. Functionally, catalyzes the NAD-dependent reduction of succinylglutamate semialdehyde into succinylglutamate. In Salmonella paratyphi C (strain RKS4594), this protein is N-succinylglutamate 5-semialdehyde dehydrogenase.